Reading from the N-terminus, the 484-residue chain is Putative sodium/proton-dependent alanine carrier protein YrbD (484 aa).

A run of 11 helical transmembrane segments spans residues Val11 to Met31, Ala66 to Pro88, Phe92 to Ile114, Trp139 to Val159, Phe172 to Phe192, Ile205 to Val225, Ser238 to Val258, Ala292 to Phe312, Gly350 to Ala370, Trp390 to Thr410, and Ala416 to Leu436.

Belongs to the alanine or glycine:cation symporter (AGCS) (TC 2.A.25) family.

It is found in the cell membrane. This chain is Putative sodium/proton-dependent alanine carrier protein YrbD (yrbD), found in Bacillus subtilis (strain 168).